The primary structure comprises 120 residues: CLAVATA3/ESR (CLE)-related protein 9 (120 aa).

The signal sequence occupies residues 1-26; that stretch reads MTMTHLNRLILISLLFVSLLLKSSTA. An N-linked (GlcNAc...) asparagine glycan is attached at asparagine 35. Residues 85 to 120 form a disordered region; it reads RSSRKQPLLSPPPPEIDPRYGVDKRLVPSGPNPLHN. Positions 100–110 are enriched in basic and acidic residues; it reads IDPRYGVDKRL. Hydroxyproline is present on residues proline 112 and proline 115. Proline 115 carries O-linked (Ara...) hydroxyproline glycosylation.

This sequence belongs to the CLV3/ESR signal peptide family. The O-glycosylation (arabinosylation) of the hydroxyproline Pro-115 enhances binding affinity of the CLE9p peptide for its receptor. In terms of tissue distribution, mostly expressed in leaves, flowers, stems and apex, and, to a lower extent, in seedlings, roots, siliques and pollen.

It is found in the secreted. The protein resides in the extracellular space. Its function is as follows. Extracellular signal peptide that regulates cell fate. Represses root apical meristem maintenance. Regulates the transition of protophloem cells from proliferation to differentiation, thus impinging on postembryonic growth capacity of the root meristem; this signaling pathway requires CRN and CLV2. This Arabidopsis thaliana (Mouse-ear cress) protein is CLAVATA3/ESR (CLE)-related protein 9.